Reading from the N-terminus, the 321-residue chain is AA9 family lytic polysaccharide monooxygenase A (321 aa).

The signal sequence occupies residues 1–21; that stretch reads MFRAQSFLPVLALVLRVAAHG. His20 is a binding site for Cu(2+). The cysteines at positions 71 and 197 are disulfide-linked. Asn72 carries an N-linked (GlcNAc...) asparagine glycan. Cu(2+) is bound at residue His105. Residue Asn157 is glycosylated (N-linked (GlcNAc...) asparagine). O2-binding residues include His183 and Gln192. Residue Tyr194 participates in Cu(2+) binding. Positions 278-306 are disordered; that stretch reads SSSAAATQSSSAAPSSSAIGTSTASSAAA. Ser293 carries the GPI-anchor amidated serine lipid modification. A propeptide spans 294–321 (removed in mature form); it reads SAIGTSTASSAAASGTAIVDANTCMNSA.

Belongs to the polysaccharide monooxygenase AA9 family. Cu(2+) is required as a cofactor.

It is found in the cell membrane. The enzyme catalyses [(1-&gt;4)-beta-D-glucosyl]n+m + reduced acceptor + O2 = 4-dehydro-beta-D-glucosyl-[(1-&gt;4)-beta-D-glucosyl]n-1 + [(1-&gt;4)-beta-D-glucosyl]m + acceptor + H2O.. In terms of biological role, lytic polysaccharide monooxygenase (LPMO) that depolymerizes crystalline and amorphous polysaccharides via the oxidation of scissile alpha- or beta-(1-4)-glycosidic bonds, yielding C1 or C4 oxidation products. Catalysis by LPMOs requires the reduction of the active-site copper from Cu(II) to Cu(I) by a reducing agent and H(2)O(2) or O(2) as a cosubstrate. Has broad specificity, cleaving at any position along the beta-glucan backbone of xyloglucan, regardless of substitutions. Shows minor activity on glucomannan. The protein is AA9 family lytic polysaccharide monooxygenase A of Gloeophyllum trabeum (strain ATCC 11539 / FP-39264 / Madison 617) (Brown rot fungus).